A 364-amino-acid polypeptide reads, in one-letter code: C2 calcium-dependent domain-containing protein 4A (364 aa).

Disordered regions lie at residues 118–175 (GSPS…PPRC) and 192–242 (AGRS…RPER). A compositionally biased stretch (polar residues) spans 220–233 (SPGSPTQAPVTSLS). The 111-residue stretch at 254 to 364 (AGGALRLAAE…ELLLGPLLLL (111 aa)) folds into the C2 domain.

Belongs to the C2CD4 family.

It is found in the nucleus. In terms of biological role, may be involved in inflammatory process. May regulate cell architecture and adhesion. The polypeptide is C2 calcium-dependent domain-containing protein 4A (C2CD4A) (Bos taurus (Bovine)).